The chain runs to 200 residues: MKIGIIAYQGSFEEHYLQLKRAFDKWSINGEITPVKIPKDLKDIDGVIIPGGESTTIGLVAKRLGILDELKEKITSGLPVMGTCAGAIMLAKEVSDAKVGKTSQPLIGAMNISIIRNYYGRQRESFEAIIDLSKIGKGKANVVFIRAPAITKLWGKTQSLAELNGVTVLAEENNILATTFHPELSDTTSIHEYFLHLVKG.

Gly-52–Ser-54 lines the L-glutamine pocket. Catalysis depends on Cys-84, which acts as the Nucleophile. L-glutamine is bound by residues Arg-116 and Ile-145–Arg-146. Residues His-181 and Glu-183 each act as charge relay system in the active site.

It belongs to the glutaminase PdxT/SNO family. As to quaternary structure, in the presence of PdxS, forms a dodecamer of heterodimers. Only shows activity in the heterodimer.

It carries out the reaction aldehydo-D-ribose 5-phosphate + D-glyceraldehyde 3-phosphate + L-glutamine = pyridoxal 5'-phosphate + L-glutamate + phosphate + 3 H2O + H(+). The enzyme catalyses L-glutamine + H2O = L-glutamate + NH4(+). It participates in cofactor biosynthesis; pyridoxal 5'-phosphate biosynthesis. Functionally, catalyzes the hydrolysis of glutamine to glutamate and ammonia as part of the biosynthesis of pyridoxal 5'-phosphate. The resulting ammonia molecule is channeled to the active site of PdxS. The polypeptide is Pyridoxal 5'-phosphate synthase subunit PdxT (Saccharolobus islandicus (strain Y.N.15.51 / Yellowstone #2) (Sulfolobus islandicus)).